Reading from the N-terminus, the 356-residue chain is NADH dehydrogenase (ubiquinone) complex I, assembly factor 6 homolog (356 aa).

The transit peptide at 1–41 (MIRNSGRILFNSLKNSNVKLINRNVIINSNIRLFSTSTNNT) directs the protein to the mitochondrion.

The protein belongs to the NDUFAF6 family.

The protein localises to the mitochondrion inner membrane. Functionally, involved in the assembly of mitochondrial NADH:ubiquinone oxidoreductase complex (complex I) at early stages. The polypeptide is NADH dehydrogenase (ubiquinone) complex I, assembly factor 6 homolog (Dictyostelium discoideum (Social amoeba)).